We begin with the raw amino-acid sequence, 112 residues long: Large ribosomal subunit protein bL17 (112 aa).

It belongs to the bacterial ribosomal protein bL17 family. In terms of assembly, part of the 50S ribosomal subunit. Contacts protein L32.

The sequence is that of Large ribosomal subunit protein bL17 from Desulforamulus reducens (strain ATCC BAA-1160 / DSM 100696 / MI-1) (Desulfotomaculum reducens).